A 73-amino-acid chain; its full sequence is UPF0154 protein BcerKBAB4_3367 (73 aa).

A helical membrane pass occupies residues 4–24; that stretch reads WLGILVGVVALVAGVALGFFI.

The protein belongs to the UPF0154 family.

It is found in the cell membrane. The sequence is that of UPF0154 protein BcerKBAB4_3367 from Bacillus mycoides (strain KBAB4) (Bacillus weihenstephanensis).